A 316-amino-acid polypeptide reads, in one-letter code: Probable prolyl 4-hydroxylase 7 (316 aa).

Residues 1-4 are Cytoplasmic-facing; it reads MDSR. The helical; Signal-anchor for type II membrane protein transmembrane segment at 5 to 24 threads the bilayer; it reads IFLAFSLCFLFTLPLISSAP. Residues 25 to 316 lie on the Lumenal side of the membrane; sequence NRFLTRSSNT…CRKSCKACSS (292 aa). The N-linked (GlcNAc...) asparagine glycan is linked to Asn96. In terms of domain architecture, Fe2OG dioxygenase spans 139 to 261; the sequence is NGESMQILHY…KWSATRWIHV (123 aa). The Fe cation site is built by His157 and Asp159. Asn233 carries an N-linked (GlcNAc...) asparagine glycan. His242 serves as a coordination point for Fe cation. Lys252 lines the 2-oxoglutarate pocket. In terms of domain architecture, ShKT spans 274-314; it reads CMDENVSCEKWAKAGECQKNPTYMVGSDKDHGYCRKSCKAC. Intrachain disulfides connect Cys274–Cys314, Cys281–Cys307, and Cys290–Cys311. Asn278 carries an N-linked (GlcNAc...) asparagine glycan.

Belongs to the P4HA family. Fe(2+) is required as a cofactor. The cofactor is L-ascorbate.

It is found in the endoplasmic reticulum membrane. It catalyses the reaction L-prolyl-[collagen] + 2-oxoglutarate + O2 = trans-4-hydroxy-L-prolyl-[collagen] + succinate + CO2. Functionally, catalyzes the post-translational formation of 4-hydroxyproline in -Xaa-Pro-Gly- sequences in proline-rich peptide sequences of plant glycoproteins and other proteins. Hydroxyprolines are important constituent of many plant cell wall glycoproteins such as extensins, hydroxyproline-rich glycoproteins, lectins and arabinogalactan proteins. The chain is Probable prolyl 4-hydroxylase 7 from Arabidopsis thaliana (Mouse-ear cress).